The chain runs to 386 residues: Putative 8-amino-7-oxononanoate synthase (386 aa).

Residue R22 coordinates substrate. 109–110 (GY) is a binding site for pyridoxal 5'-phosphate. Position 134 (H134) interacts with substrate. Pyridoxal 5'-phosphate is bound by residues S182, 207–210 (DEAH), and 238–241 (TLSK). The residue at position 241 (K241) is an N6-(pyridoxal phosphate)lysine. T356 provides a ligand contact to substrate.

It belongs to the class-II pyridoxal-phosphate-dependent aminotransferase family. BioF subfamily. Homodimer. Pyridoxal 5'-phosphate is required as a cofactor.

It carries out the reaction 6-carboxyhexanoyl-[ACP] + L-alanine + H(+) = (8S)-8-amino-7-oxononanoate + holo-[ACP] + CO2. It functions in the pathway cofactor biosynthesis; biotin biosynthesis. Catalyzes the decarboxylative condensation of pimeloyl-[acyl-carrier protein] and L-alanine to produce 8-amino-7-oxononanoate (AON), [acyl-carrier protein], and carbon dioxide. The sequence is that of Putative 8-amino-7-oxononanoate synthase (bioF) from Trichormus variabilis (strain ATCC 29413 / PCC 7937) (Anabaena variabilis).